A 419-amino-acid polypeptide reads, in one-letter code: Gamma-glutamyl phosphate reductase (419 aa).

This sequence belongs to the gamma-glutamyl phosphate reductase family.

It is found in the cytoplasm. It catalyses the reaction L-glutamate 5-semialdehyde + phosphate + NADP(+) = L-glutamyl 5-phosphate + NADPH + H(+). It participates in amino-acid biosynthesis; L-proline biosynthesis; L-glutamate 5-semialdehyde from L-glutamate: step 2/2. Its function is as follows. Catalyzes the NADPH-dependent reduction of L-glutamate 5-phosphate into L-glutamate 5-semialdehyde and phosphate. The product spontaneously undergoes cyclization to form 1-pyrroline-5-carboxylate. This Bordetella avium (strain 197N) protein is Gamma-glutamyl phosphate reductase.